A 119-amino-acid polypeptide reads, in one-letter code: uncharacterized protein (119 aa).

Residues 86 to 119 (KKQRMKMLTEQEEEEEEEEEEPPKPKKKVINRKK) form a disordered region. Acidic residues predominate over residues 95–106 (EQEEEEEEEEEE). A compositionally biased stretch (basic residues) spans 110 to 119 (PKKKVINRKK).

This is an uncharacterized protein from Sputnik virophage.